We begin with the raw amino-acid sequence, 308 residues long: UDP-N-acetylenolpyruvoylglucosamine reductase (308 aa).

Residues 22-185 (RVGGPADWLF…TEATFRAEAG (164 aa)) form the FAD-binding PCMH-type domain. Arginine 165 is an active-site residue. Positions 197–211 (QIARRDSSQPTKERS) are enriched in basic and acidic residues. Residues 197–228 (QIARRDSSQPTKERSAGSTFRNPAGFSSTGRA) are disordered. Residues 212–226 (AGSTFRNPAGFSSTG) show a composition bias toward polar residues. Serine 214 acts as the Proton donor in catalysis. Glutamate 296 is a catalytic residue.

The protein belongs to the MurB family. Requires FAD as cofactor.

The protein resides in the cytoplasm. It catalyses the reaction UDP-N-acetyl-alpha-D-muramate + NADP(+) = UDP-N-acetyl-3-O-(1-carboxyvinyl)-alpha-D-glucosamine + NADPH + H(+). It participates in cell wall biogenesis; peptidoglycan biosynthesis. Its function is as follows. Cell wall formation. This chain is UDP-N-acetylenolpyruvoylglucosamine reductase, found in Cereibacter sphaeroides (strain ATCC 17029 / ATH 2.4.9) (Rhodobacter sphaeroides).